The following is a 578-amino-acid chain: Glutathione hydrolase 2 (578 aa).

A signal peptide spans 1 to 26 (MNSFMSLVRTATIALLLIAFLQNANA). Residue asparagine 94 is glycosylated (N-linked (GlcNAc...) asparagine). An L-glutamate-binding site is contributed by arginine 103. 2 N-linked (GlcNAc...) asparagine glycosylation sites follow: asparagine 176 and asparagine 227. Threonine 374 functions as the Nucleophile in the catalytic mechanism. L-glutamate is bound by residues threonine 392, asparagine 394, glutamate 413, aspartate 416, 446–447 (SS), and 467–468 (GG). N-linked (GlcNAc...) asparagine glycosylation is present at asparagine 511.

Belongs to the gamma-glutamyltransferase family. Expressed in roots, immature trichomes and pollen. In developing siliques, specifically expressed in the embryo, endosperm, outer integument and a small portion of the funiculus.

It is found in the secreted. It localises to the extracellular space. Its subcellular location is the apoplast. It carries out the reaction an N-terminal (5-L-glutamyl)-[peptide] + an alpha-amino acid = 5-L-glutamyl amino acid + an N-terminal L-alpha-aminoacyl-[peptide]. The catalysed reaction is glutathione + H2O = L-cysteinylglycine + L-glutamate. The enzyme catalyses an S-substituted glutathione + H2O = an S-substituted L-cysteinylglycine + L-glutamate. The protein operates within sulfur metabolism; glutathione metabolism. In terms of biological role, may be required for glutathione transport into developing seeds. The sequence is that of Glutathione hydrolase 2 (GGT2) from Arabidopsis thaliana (Mouse-ear cress).